Reading from the N-terminus, the 358-residue chain is uncharacterized protein (358 aa).

Residues Cys-39, His-61, Cys-92, Cys-95, Cys-98, Cys-106, and Asp-157 each coordinate Zn(2+).

This sequence belongs to the zinc-containing alcohol dehydrogenase family. Zn(2+) serves as cofactor.

This is an uncharacterized protein from Escherichia coli (strain K12).